Reading from the N-terminus, the 119-residue chain is Non-specific lipid-transfer protein 12 (119 aa).

Residues 1–24 (MAFTPKIITCLIVLTIYMASPTES) form the signal peptide. 4 disulfide bridges follow: cysteine 28–cysteine 75, cysteine 38–cysteine 52, cysteine 53–cysteine 98, and cysteine 73–cysteine 112.

It belongs to the plant LTP family.

Plant non-specific lipid-transfer proteins transfer phospholipids as well as galactolipids across membranes. May play a role in wax or cutin deposition in the cell walls of expanding epidermal cells and certain secretory tissues. This is Non-specific lipid-transfer protein 12 (LTP12) from Arabidopsis thaliana (Mouse-ear cress).